We begin with the raw amino-acid sequence, 1181 residues long: Putative primase (1181 aa).

The tract at residues 1141 to 1181 (RSHSTMVEHDMDDDESTNKKQELEEEDEECIDIDEYNNERF) is disordered. Over residues 1163–1181 (LEEEDEECIDIDEYNNERF) the composition is skewed to acidic residues.

It belongs to the eukaryotic-type primase small subunit family.

Its function is as follows. Synthesizes small RNA primers for the Okazaki fragments on both template strands at replication forks during viral DNA synthesis. This Magallana gigas (Pacific oyster) protein is Putative primase.